The sequence spans 546 residues: Hydroxylamine reductase (546 aa).

4 residues coordinate [4Fe-4S] cluster: cysteine 3, cysteine 6, cysteine 18, and cysteine 25. Residues histidine 245, glutamate 269, cysteine 313, cysteine 401, cysteine 429, cysteine 454, glutamate 488, and lysine 490 each contribute to the hybrid [4Fe-2O-2S] cluster site. Cysteine 401 carries the cysteine persulfide modification.

The protein belongs to the HCP family. [4Fe-4S] cluster is required as a cofactor. Hybrid [4Fe-2O-2S] cluster serves as cofactor.

The protein localises to the cytoplasm. It carries out the reaction A + NH4(+) + H2O = hydroxylamine + AH2 + H(+). With respect to regulation, inhibited by cyanide and by sulfide and iron reagents such as dithioerythritol, 2,2'-dipyridyl and o-phenanthroline. Could be involved in assimilation and/or detoxification of hydroxylamine, which is a toxic compound that may be formed during nitrate/nitrite assimilation. Catalyzes the reduction of hydroxylamine to form NH(3) and H(2)O. It has a low reductase activity with FAD, FMN, benzyl viologen and bromphenol blue as electrons donors, but it is not able to use NAD or NADP. The polypeptide is Hydroxylamine reductase (Rhodobacter capsulatus (Rhodopseudomonas capsulata)).